A 375-amino-acid chain; its full sequence is Beta sliding clamp (375 aa).

Belongs to the beta sliding clamp family. As to quaternary structure, forms a ring-shaped head-to-tail homodimer around DNA which binds and tethers DNA polymerases and other proteins to the DNA. The DNA replisome complex has a single clamp-loading complex (3 tau and 1 each of delta, delta', psi and chi subunits) which binds 3 Pol III cores (1 core on the leading strand and 2 on the lagging strand) each with a beta sliding clamp dimer. Additional proteins in the replisome are other copies of gamma, psi and chi, Ssb, DNA helicase and RNA primase.

It localises to the cytoplasm. Confers DNA tethering and processivity to DNA polymerases and other proteins. Acts as a clamp, forming a ring around DNA (a reaction catalyzed by the clamp-loading complex) which diffuses in an ATP-independent manner freely and bidirectionally along dsDNA. Initially characterized for its ability to contact the catalytic subunit of DNA polymerase III (Pol III), a complex, multichain enzyme responsible for most of the replicative synthesis in bacteria; Pol III exhibits 3'-5' exonuclease proofreading activity. The beta chain is required for initiation of replication as well as for processivity of DNA replication. The chain is Beta sliding clamp (dnaN) from Synechococcus elongatus (strain ATCC 33912 / PCC 7942 / FACHB-805) (Anacystis nidulans R2).